The primary structure comprises 125 residues: Small ribosomal subunit protein eS6 (125 aa).

Belongs to the eukaryotic ribosomal protein eS6 family.

The protein is Small ribosomal subunit protein eS6 of Pyrococcus horikoshii (strain ATCC 700860 / DSM 12428 / JCM 9974 / NBRC 100139 / OT-3).